We begin with the raw amino-acid sequence, 369 residues long: Eukaryotic translation initiation factor 3 subunit F (369 aa).

In terms of domain architecture, MPN spans 31 to 170 (VNIQPQAVFS…TKTYISAPVA (140 aa)). Residues 309–334 (LDEGKEGGEKKDGEGAEGDKKTDGQR) are compositionally biased toward basic and acidic residues. The disordered stretch occupies residues 309-369 (LDEGKEGGEK…EPREPREAAE (61 aa)). The span at 335–353 (GQRGQGGKRGGRSGGAGGR) shows a compositional bias: gly residues. The segment covering 354–369 (GGREQREPREPREAAE) has biased composition (basic and acidic residues).

This sequence belongs to the eIF-3 subunit F family. Component of the eukaryotic translation initiation factor 3 (eIF-3) complex.

It localises to the cytoplasm. Its function is as follows. Component of the eukaryotic translation initiation factor 3 (eIF-3) complex, which is involved in protein synthesis of a specialized repertoire of mRNAs and, together with other initiation factors, stimulates binding of mRNA and methionyl-tRNAi to the 40S ribosome. The eIF-3 complex specifically targets and initiates translation of a subset of mRNAs involved in cell proliferation. This chain is Eukaryotic translation initiation factor 3 subunit F, found in Neurospora crassa (strain ATCC 24698 / 74-OR23-1A / CBS 708.71 / DSM 1257 / FGSC 987).